Reading from the N-terminus, the 293-residue chain is Bifunctional protein FolD (293 aa).

NADP(+) is bound by residues 165 to 167 (GRS), serine 190, and isoleucine 231.

It belongs to the tetrahydrofolate dehydrogenase/cyclohydrolase family. Homodimer.

It catalyses the reaction (6R)-5,10-methylene-5,6,7,8-tetrahydrofolate + NADP(+) = (6R)-5,10-methenyltetrahydrofolate + NADPH. The catalysed reaction is (6R)-5,10-methenyltetrahydrofolate + H2O = (6R)-10-formyltetrahydrofolate + H(+). It participates in one-carbon metabolism; tetrahydrofolate interconversion. Catalyzes the oxidation of 5,10-methylenetetrahydrofolate to 5,10-methenyltetrahydrofolate and then the hydrolysis of 5,10-methenyltetrahydrofolate to 10-formyltetrahydrofolate. In Synechococcus sp. (strain CC9311), this protein is Bifunctional protein FolD.